The primary structure comprises 485 residues: tRNA sulfurtransferase (485 aa).

Residues Glu61–Arg165 form the THUMP domain. ATP is bound by residues Leu183–Ile184, Lys265, Gly287, and Gln296. Cysteines 344 and 456 form a disulfide. The Rhodanese domain maps to Leu404–Lys483. Cys456 (cysteine persulfide intermediate) is an active-site residue.

Belongs to the ThiI family.

The protein localises to the cytoplasm. It catalyses the reaction [ThiI sulfur-carrier protein]-S-sulfanyl-L-cysteine + a uridine in tRNA + 2 reduced [2Fe-2S]-[ferredoxin] + ATP + H(+) = [ThiI sulfur-carrier protein]-L-cysteine + a 4-thiouridine in tRNA + 2 oxidized [2Fe-2S]-[ferredoxin] + AMP + diphosphate. The catalysed reaction is [ThiS sulfur-carrier protein]-C-terminal Gly-Gly-AMP + S-sulfanyl-L-cysteinyl-[cysteine desulfurase] + AH2 = [ThiS sulfur-carrier protein]-C-terminal-Gly-aminoethanethioate + L-cysteinyl-[cysteine desulfurase] + A + AMP + 2 H(+). It functions in the pathway cofactor biosynthesis; thiamine diphosphate biosynthesis. Catalyzes the ATP-dependent transfer of a sulfur to tRNA to produce 4-thiouridine in position 8 of tRNAs, which functions as a near-UV photosensor. Also catalyzes the transfer of sulfur to the sulfur carrier protein ThiS, forming ThiS-thiocarboxylate. This is a step in the synthesis of thiazole, in the thiamine biosynthesis pathway. The sulfur is donated as persulfide by IscS. The sequence is that of tRNA sulfurtransferase from Haemophilus influenzae (strain PittEE).